Reading from the N-terminus, the 436-residue chain is F-box/LRR-repeat protein At2g40920 (436 aa).

The F-box domain occupies 48 to 98 (EYLLQNFDLDHVMEILMRFPLTSLTRFKCVSKQWSSLISSRYFCNLLYTTV). LRR repeat units follow at residues 276–301 (NCVV…IHLD) and 393–416 (YYNL…WFDK).

The polypeptide is F-box/LRR-repeat protein At2g40920 (Arabidopsis thaliana (Mouse-ear cress)).